The primary structure comprises 476 residues: Glycogen synthase (476 aa).

Lys-15 is an ADP-alpha-D-glucose binding site.

The protein belongs to the glycosyltransferase 1 family. Bacterial/plant glycogen synthase subfamily.

The catalysed reaction is [(1-&gt;4)-alpha-D-glucosyl](n) + ADP-alpha-D-glucose = [(1-&gt;4)-alpha-D-glucosyl](n+1) + ADP + H(+). Its pathway is glycan biosynthesis; glycogen biosynthesis. Functionally, synthesizes alpha-1,4-glucan chains using ADP-glucose. The polypeptide is Glycogen synthase (Streptococcus agalactiae serotype III (strain NEM316)).